Consider the following 310-residue polypeptide: Aspartate carbamoyltransferase catalytic subunit 2 (310 aa).

Carbamoyl phosphate is bound by residues Arg-55 and Thr-56. An L-aspartate-binding site is contributed by Lys-85. Carbamoyl phosphate is bound by residues Arg-106, His-134, and Gln-137. L-aspartate contacts are provided by Arg-167 and Arg-228. Positions 266 and 267 each coordinate carbamoyl phosphate.

The protein belongs to the aspartate/ornithine carbamoyltransferase superfamily. ATCase family. Heterododecamer (2C3:3R2) of six catalytic PyrB chains organized as two trimers (C3), and six regulatory PyrI chains organized as three dimers (R2).

It catalyses the reaction carbamoyl phosphate + L-aspartate = N-carbamoyl-L-aspartate + phosphate + H(+). It participates in pyrimidine metabolism; UMP biosynthesis via de novo pathway; (S)-dihydroorotate from bicarbonate: step 2/3. Its function is as follows. Catalyzes the condensation of carbamoyl phosphate and aspartate to form carbamoyl aspartate and inorganic phosphate, the committed step in the de novo pyrimidine nucleotide biosynthesis pathway. The chain is Aspartate carbamoyltransferase catalytic subunit 2 from Shewanella halifaxensis (strain HAW-EB4).